A 316-amino-acid polypeptide reads, in one-letter code: 33 kDa chaperonin (316 aa).

2 disulfides stabilise this stretch: Cys-239-Cys-241 and Cys-272-Cys-275.

The protein belongs to the HSP33 family. Post-translationally, under oxidizing conditions two disulfide bonds are formed involving the reactive cysteines. Under reducing conditions zinc is bound to the reactive cysteines and the protein is inactive.

It is found in the cytoplasm. Redox regulated molecular chaperone. Protects both thermally unfolding and oxidatively damaged proteins from irreversible aggregation. Plays an important role in the bacterial defense system toward oxidative stress. The polypeptide is 33 kDa chaperonin (Clostridium perfringens (strain SM101 / Type A)).